A 526-amino-acid polypeptide reads, in one-letter code: Phenylacetaldehyde oxime monooxygenase CYP71AN24 (526 aa).

The chain crosses the membrane as a helical span at residues 22–42 (SFNIFLVPILCLSIFILFSLT). Cys465 provides a ligand contact to heme.

Belongs to the cytochrome P450 family. The cofactor is heme. As to expression, expressed in seedlings and leaves.

The protein localises to the membrane. The enzyme catalyses (E)-phenylacetaldehyde oxime + reduced [NADPH--hemoprotein reductase] + O2 = (R)-mandelonitrile + oxidized [NADPH--hemoprotein reductase] + 2 H2O + H(+). It carries out the reaction phenylacetonitrile + reduced [NADPH--hemoprotein reductase] + O2 = (R)-mandelonitrile + oxidized [NADPH--hemoprotein reductase] + H2O + H(+). In terms of biological role, involved in L-phenylalanine-derived cyanogenic glycoside biosynthesis, including prunasin and amygdalin defensive agents. Catalyzes the conversion of phenylacetaldoxime (PAOx) and phenylacetonitrile (PAN) into mandelonitrile (MAN). To a lower extent, can convert various aromatic aldoximes and nitriles; mediates the transformation of 4-hydroxyphenylacetaldoxime, 4-hydroxyphenylacetonitrile, indole-3-acetal-doxime and indole-3-acetonitrile into the corresponding hydroxynitriles, but cannot use the aliphatic compounds 2-methylpropanaloxime and 2-methylpropanenitrile as substrates. The polypeptide is Phenylacetaldehyde oxime monooxygenase CYP71AN24 (Prunus mume (Japanese apricot)).